We begin with the raw amino-acid sequence, 312 residues long: Protease HtpX homolog (312 aa).

Helical transmembrane passes span 6-26 (TAVL…AIGG) and 28-48 (GGMM…YWYA). Zn(2+) is bound at residue H130. E131 is an active-site residue. Position 134 (H134) interacts with Zn(2+). 2 consecutive transmembrane segments (helical) span residues 145–165 (ITAS…FFGG) and 173–193 (PFGG…AMVV). E202 lines the Zn(2+) pocket. Low complexity predominate over residues 287–297 (PAPARAAPARG). Residues 287-312 (PAPARAAPARGPWGGNTGGTRRGPWG) form a disordered region. Positions 298–312 (PWGGNTGGTRRGPWG) are enriched in gly residues.

Belongs to the peptidase M48B family. Zn(2+) is required as a cofactor.

The protein localises to the cell inner membrane. This chain is Protease HtpX homolog, found in Azorhizobium caulinodans (strain ATCC 43989 / DSM 5975 / JCM 20966 / LMG 6465 / NBRC 14845 / NCIMB 13405 / ORS 571).